The primary structure comprises 43 residues: Protein PsbN (43 aa).

A helical transmembrane segment spans residues 7-27; the sequence is LSIGIAVVVIAVTGFSIYTAF.

It belongs to the PsbN family.

Its subcellular location is the cellular thylakoid membrane. Functionally, may play a role in photosystem I and II biogenesis. The chain is Protein PsbN from Picosynechococcus sp. (strain ATCC 27264 / PCC 7002 / PR-6) (Agmenellum quadruplicatum).